The sequence spans 238 residues: Demethylmenaquinone methyltransferase (238 aa).

S-adenosyl-L-methionine contacts are provided by residues T65, D85, and 109–110; that span reads DA.

The protein belongs to the class I-like SAM-binding methyltransferase superfamily. MenG/UbiE family.

It carries out the reaction a 2-demethylmenaquinol + S-adenosyl-L-methionine = a menaquinol + S-adenosyl-L-homocysteine + H(+). It functions in the pathway quinol/quinone metabolism; menaquinone biosynthesis; menaquinol from 1,4-dihydroxy-2-naphthoate: step 2/2. Its function is as follows. Methyltransferase required for the conversion of demethylmenaquinol (DMKH2) to menaquinol (MKH2). The sequence is that of Demethylmenaquinone methyltransferase from Roseiflexus castenholzii (strain DSM 13941 / HLO8).